Here is a 235-residue protein sequence, read N- to C-terminus: Uridylate kinase (235 aa).

Residue Lys-9–Gly-12 coordinates ATP. The involved in allosteric activation by GTP stretch occupies residues Gly-17–Gly-22. Gly-51 lines the UMP pocket. ATP-binding residues include Gly-52 and Arg-56. Residues Asp-71 and Cys-132–Thr-139 each bind UMP. The ATP site is built by Thr-159, Tyr-165, and Asp-168.

Belongs to the UMP kinase family. Homohexamer.

The protein resides in the cytoplasm. It carries out the reaction UMP + ATP = UDP + ADP. It participates in pyrimidine metabolism; CTP biosynthesis via de novo pathway; UDP from UMP (UMPK route): step 1/1. Allosterically activated by GTP. Inhibited by UTP. In terms of biological role, catalyzes the reversible phosphorylation of UMP to UDP. The chain is Uridylate kinase from Synechococcus sp. (strain WH7803).